The primary structure comprises 360 residues: Photosystem II protein D1 (360 aa).

The next 3 helical transmembrane spans lie at 29 to 46 (YIGW…TAAS), 118 to 133 (HFLI…EWEL), and 142 to 156 (WIFV…AASA). Histidine 118 is a binding site for chlorophyll a. Position 126 (tryptophan 126) interacts with pheophytin a. 2 residues coordinate [CaMn4O5] cluster: aspartate 170 and glutamate 189. The chain crosses the membrane as a helical span at residues 197–218 (FHMAGVAGVFGGSLFSAMHGSL). Histidine 198 is a chlorophyll a binding site. A quinone contacts are provided by residues histidine 215 and 264–265 (SF). Residue histidine 215 participates in Fe cation binding. Histidine 272 is a binding site for Fe cation. Residues 274–288 (FLAAWPVVGIWLTAL) traverse the membrane as a helical segment. 4 residues coordinate [CaMn4O5] cluster: histidine 332, glutamate 333, aspartate 342, and alanine 344. Positions 345 to 360 (SNEILPVAISAPSVVG) are excised as a propeptide.

It belongs to the reaction center PufL/M/PsbA/D family. PSII is composed of 1 copy each of membrane proteins PsbA, PsbB, PsbC, PsbD, PsbE, PsbF, PsbH, PsbI, PsbJ, PsbK, PsbL, PsbM, PsbT, PsbX, PsbY, PsbZ, Psb30/Ycf12, at least 3 peripheral proteins of the oxygen-evolving complex and a large number of cofactors. It forms dimeric complexes. The D1/D2 heterodimer binds P680, chlorophylls that are the primary electron donor of PSII, and subsequent electron acceptors. It shares a non-heme iron and each subunit binds pheophytin, quinone, additional chlorophylls, carotenoids and lipids. D1 provides most of the ligands for the Mn4-Ca-O5 cluster of the oxygen-evolving complex (OEC). There is also a Cl(-1) ion associated with D1 and D2, which is required for oxygen evolution. The PSII complex binds additional chlorophylls, carotenoids and specific lipids. is required as a cofactor. In terms of processing, tyr-161 forms a radical intermediate that is referred to as redox-active TyrZ, YZ or Y-Z. C-terminally processed by CTPA; processing is essential to allow assembly of the oxygen-evolving complex and thus photosynthetic growth.

Its subcellular location is the plastid. It localises to the chloroplast thylakoid membrane. The enzyme catalyses 2 a plastoquinone + 4 hnu + 2 H2O = 2 a plastoquinol + O2. Functionally, photosystem II (PSII) is a light-driven water:plastoquinone oxidoreductase that uses light energy to abstract electrons from H(2)O, generating O(2) and a proton gradient subsequently used for ATP formation. It consists of a core antenna complex that captures photons, and an electron transfer chain that converts photonic excitation into a charge separation. The D1/D2 (PsbA/PsbD) reaction center heterodimer binds P680, the primary electron donor of PSII as well as several subsequent electron acceptors. In Ectocarpus siliculosus (Brown alga), this protein is Photosystem II protein D1.